The primary structure comprises 307 residues: tRNA pseudouridine synthase B (307 aa).

Asp38 acts as the Nucleophile in catalysis.

The protein belongs to the pseudouridine synthase TruB family. Type 1 subfamily.

The enzyme catalyses uridine(55) in tRNA = pseudouridine(55) in tRNA. Its function is as follows. Responsible for synthesis of pseudouridine from uracil-55 in the psi GC loop of transfer RNAs. In Bacillus cereus (strain ATCC 14579 / DSM 31 / CCUG 7414 / JCM 2152 / NBRC 15305 / NCIMB 9373 / NCTC 2599 / NRRL B-3711), this protein is tRNA pseudouridine synthase B.